A 346-amino-acid polypeptide reads, in one-letter code: MGVTELGKLIGKEARREIKLESLAGKCVALDAYNALYQFLASIRQPDGTPLMDRAGRITSHLSGLFYRTINLLEAGVKPVYVFDGKPPEFKLLEIEQRKKAKEKALEEVEKAIREGRREDVAKYAKRAIFLTSEMVEDAKKLLTYMGIPWVQAPSEGEAQAAHMAKRGHCWAVGSQDYDSLLFGSPRLVRNLAVSPKRKVGEEVVELSPELIELDAVLKSLKLKGREQLIDLAILLGTDYNPEGVPGVGPQKALKLIWEFGSLEKLLQTVLKGVQFPVDPLKIREFFLNPPVTDQYSTELSTPDERKIVELLVEEHDFSQERVAKALERLAKARGKVKTTSLDAFF.

The tract at residues M1–K102 is N-domain. D31, D84, E156, E158, D177, D179, and D239 together coordinate Mg(2+). Residues D120 to G261 are I-domain.

This sequence belongs to the XPG/RAD2 endonuclease family. FEN1 subfamily. Interacts with PCNA. PCNA stimulates the nuclease activity without altering cleavage specificity. Mg(2+) is required as a cofactor.

Structure-specific nuclease with 5'-flap endonuclease and 5'-3' exonuclease activities involved in DNA replication and repair. During DNA replication, cleaves the 5'-overhanging flap structure that is generated by displacement synthesis when DNA polymerase encounters the 5'-end of a downstream Okazaki fragment. Binds the unpaired 3'-DNA end and kinks the DNA to facilitate 5' cleavage specificity. Cleaves one nucleotide into the double-stranded DNA from the junction in flap DNA, leaving a nick for ligation. Also involved in the base excision repair (BER) pathway. Acts as a genome stabilization factor that prevents flaps from equilibrating into structures that lead to duplications and deletions. Also possesses 5'-3' exonuclease activity on nicked or gapped double-stranded DNA. The chain is Flap endonuclease 1 from Pyrobaculum calidifontis (strain DSM 21063 / JCM 11548 / VA1).